A 214-amino-acid polypeptide reads, in one-letter code: pH-sensitive calcium channel (214 aa).

Topologically, residues M1–R15 are cytoplasmic. A helical transmembrane segment spans residues I16–V37. Residues P38 to P44 lie on the Extracellular side of the membrane. The chain crosses the membrane as a helical span at residues L45–M59. Topologically, residues R60–G66 are cytoplasmic. A helical transmembrane segment spans residues Y67–S86. The Extracellular segment spans residues H87–Y95. A helical transmembrane segment spans residues V96–K117. The Cytoplasmic segment spans residues M118–L122. A helical membrane pass occupies residues S123–S146. The Extracellular portion of the chain corresponds to P147–A151. A helical transmembrane segment spans residues A152–I175. The Cytoplasmic portion of the chain corresponds to K176–I185. A helical membrane pass occupies residues P186–F207. At G208–D214 the chain is on the extracellular side.

It belongs to the BI1 family. Monomer.

Its subcellular location is the cell membrane. It carries out the reaction Ca(2+)(in) = Ca(2+)(out). The calcium-release activity is mediated by two factors: pH and transmembrane ion gradient. It was proposed, based on an MD simulation, that the conserved aspartyl dyad (Asp-171-Asp-195) regulates Ca(2+) binding, pH sensing, and the channel pore opening and closing, and that protonation of Asp-171 probably weakens its interaction with Arg-60, facilitating the opening of the channel. Another study using nanodiscs suggests that Asp-171 is not a pH sensor regulating the pore dynamics; instead, it is only involved in the gating of calcium ions. When crystallized in detergents at different pH conditions, the transition between open and closed conformations is regulated by pH. Ca(2+) binding is inhibited by Na(+), K(+), Li(+), Yb(3+) and Lu(3+), but not by Mg(2+) and Mn(2+). Its function is as follows. Calcium channel that probably plays a role in the regulation of calcium homeostasis. Uptakes calcium ions and mediates calcium flux in proteoliposomes in a pH-dependent manner. When expressed in E.coli in the presence of high extracellular calcium concentrations, shows calcium-leak activity, increasing intracellular calcium concentration. It can also mediate Ca(2+) flux from the endoplamic reticulum (ER) when expressed in permeabilized mammalian cells. Calcium transport activity is also detected in ER-like lipid vesicles. The polypeptide is pH-sensitive calcium channel (Bacillus subtilis (strain 168)).